The primary structure comprises 183 residues: Nucleoside triphosphate pyrophosphatase (183 aa).

Catalysis depends on aspartate 71, which acts as the Proton acceptor.

It belongs to the Maf family. It depends on a divalent metal cation as a cofactor.

The protein resides in the cytoplasm. The enzyme catalyses a ribonucleoside 5'-triphosphate + H2O = a ribonucleoside 5'-phosphate + diphosphate + H(+). It carries out the reaction a 2'-deoxyribonucleoside 5'-triphosphate + H2O = a 2'-deoxyribonucleoside 5'-phosphate + diphosphate + H(+). Nucleoside triphosphate pyrophosphatase. May have a dual role in cell division arrest and in preventing the incorporation of modified nucleotides into cellular nucleic acids. This chain is Nucleoside triphosphate pyrophosphatase, found in Campylobacter jejuni subsp. doylei (strain ATCC BAA-1458 / RM4099 / 269.97).